Consider the following 326-residue polypeptide: Metallophosphoesterase domain-containing protein 1 (326 aa).

Belongs to the UPF0046 family. In terms of tissue distribution, expressed predominantly in adult brain.

Functionally, may have metallophosphoesterase activity (in vitro). The sequence is that of Metallophosphoesterase domain-containing protein 1 (MPPED1) from Homo sapiens (Human).